The following is a 1228-amino-acid chain: DNA-directed RNA polymerase subunit beta (1228 aa).

This sequence belongs to the RNA polymerase beta chain family. The RNAP catalytic core consists of 2 alpha, 1 beta, 1 beta' and 1 omega subunit. When a sigma factor is associated with the core the holoenzyme is formed, which can initiate transcription.

It carries out the reaction RNA(n) + a ribonucleoside 5'-triphosphate = RNA(n+1) + diphosphate. Its function is as follows. DNA-dependent RNA polymerase catalyzes the transcription of DNA into RNA using the four ribonucleoside triphosphates as substrates. The protein is DNA-directed RNA polymerase subunit beta of Leptospira biflexa.